The sequence spans 186 residues: Putative 3-methyladenine DNA glycosylase (186 aa).

The protein belongs to the DNA glycosylase MPG family.

The sequence is that of Putative 3-methyladenine DNA glycosylase from Borreliella burgdorferi (strain ATCC 35210 / DSM 4680 / CIP 102532 / B31) (Borrelia burgdorferi).